The following is a 287-amino-acid chain: Mitochondrial glycine transporter B (287 aa).

3 Solcar repeats span residues 7–97 (HPAL…LKQH), 104–188 (PSAG…AKKA), and 198–282 (IAPL…LMAR). Transmembrane regions (helical) follow at residues 13–38 (FMCG…TRLQ), 72–98 (GVSP…KQHY), 110–135 (VLLG…TRFE), 163–186 (GLTA…SQAK), 202–228 (VNFG…KTHM), and 257–275 (GAVP…AWTV).

It belongs to the mitochondrial carrier (TC 2.A.29) family. SLC25A38 subfamily. As to expression, at 24 hours post-fertilization, expressed predominantly in posterior blood island, posterior cardinal vein and circulating blood. At 34 hours post-fertilization, becomes restricted to posterior blood island and circulating blood.

The protein resides in the mitochondrion inner membrane. The catalysed reaction is glycine(in) = glycine(out). In terms of biological role, mitochondrial glycine transporter that imports glycine into the mitochondrial matrix. Plays an important role in providing glycine for the first enzymatic step in heme biosynthesis, the condensation of glycine with succinyl-CoA to produce 5-aminolevulinate (ALA) in the mitochondrial matrix. Required during erythropoiesis. Functionally, may play a role as pro-apoptotic protein that induces caspase-dependent apoptosis. The protein is Mitochondrial glycine transporter B (slc25a38b) of Danio rerio (Zebrafish).